The primary structure comprises 918 residues: MELGTLLAQPGLWTRDTSWALLYFLCYILPQTAPQVLRIGGIFETVENEPVNVEELAFKFAVTSINRNRTLMPNTTLTYDIQRINLFDSFEASRRACDQLALGVAALFGPSHSSSVSAVQSICNALEVPHIQTRWKHPSVDNKDLFYINLYPDYAAISRAILDLVLYYNWKTVTVVYEDSTGLIRLQELIKAPSRYNIKIKIRQLPSGNKDAKPLLKEMKKGKEFYVIFDCSHETAAEILKQILFMGMMTEYYHYFFTTLDLFALDLELYRYSGVNMTGFRLLNIDNPHVSSIIEKWSMERLQAPPRPETGLLDGMMTTEAALMYDAVYMVAIASHRASQLTVSSLQCHRHKPWRLGPRFMNLIKEARWDGLTGHITFNKTNGLRKDFDLDIISLKEEGTEKAAGEVSKHLYKVWKKIGIWNSNSGLNMTDSNKDKSSNITDSLANRTLIVTTILEEPYVMYRKSDKPLYGNDRFEGYCLDLLKELSNILGFIYDVKLVPDGKYGAQNDKGEWNGMVKELIDHRADLAVAPLTITYVREKVIDFSKPFMTLGISILYRKPNGTNPGVFSFLNPLSPDIWMYVLLACLGVSCVLFVIARFTPYEWYNPHPCNPDSDVVENNFTLLNSFWFGVGALMQQGSELMPKALSTRIVGGIWWFFTLIIISSYTANLAAFLTVERMESPIDSADDLAKQTKIEYGAVRDGSTMTFFKKSKISTYEKMWAFMSSRQQTALVRNSDEGIQRVLTTDYALLMESTSIEYVTQRNCNLTQIGGLIDSKGYGVGTPIGSPYRDKITIAILQLQEEGKLHMMKEKWWRGNGCPEEDNKEASALGVENIGGIFIVLAAGLVLSVFVAIGEFIYKSRKNNDIEQAFCFFYGLQCKQTHPTNSTSGTTLSTDLECGKLIREERGIRKQSSVHTV.

An N-terminal signal peptide occupies residues 1 to 30 (MELGTLLAQPGLWTRDTSWALLYFLCYILP). Topologically, residues 31–576 (QTAPQVLRIG…VFSFLNPLSP (546 aa)) are extracellular. N-linked (GlcNAc...) asparagine glycans are attached at residues Asn68, Asn74, Asn276, Asn379, Asn428, Asn439, and Asn446. 3 residues coordinate L-glutamate: Pro531, Thr533, and Arg538. An N-linked (GlcNAc...) asparagine glycan is attached at Asn561. Residues 577 to 597 (DIWMYVLLACLGVSCVLFVIA) form a helical membrane-spanning segment. Topologically, residues 598–653 (RFTPYEWYNPHPCNPDSDVVENNFTLLNSFWFGVGALMQQGSELMPKALSTRIVGG) are cytoplasmic. Residues 654 to 674 (IWWFFTLIIISSYTANLAAFL) traverse the membrane as a helical segment. Residues 675–834 (TVERMESPID…KEASALGVEN (160 aa)) are Extracellular-facing. L-glutamate is bound by residues Ser704 and Thr705. Ser725 is subject to Phosphoserine; by PKC. Glu753 is a binding site for L-glutamate. Phosphothreonine; by PKC is present on Thr761. A disulfide bridge connects residues Cys765 and Cys819. Asn766 is a glycosylation site (N-linked (GlcNAc...) asparagine). The chain crosses the membrane as a helical span at residues 835–855 (IGGIFIVLAAGLVLSVFVAIG). The Cytoplasmic segment spans residues 856–918 (EFIYKSRKNN…IRKQSSVHTV (63 aa)).

The protein belongs to the glutamate-gated ion channel (TC 1.A.10.1) family. GRIK1 subfamily. In terms of assembly, homotetramer or heterotetramer of pore-forming glutamate receptor subunits. Tetramers may be formed by the dimerization of dimers. Can form functional heteromeric receptors with GRIK4 and GRIK5. Interacts with KLHL17.

The protein localises to the cell membrane. Its subcellular location is the postsynaptic cell membrane. It catalyses the reaction Ca(2+)(in) = Ca(2+)(out). Its function is as follows. Ionotropic glutamate receptor that functions as a cation-permeable ligand-gated ion channel, gated by L-glutamate and the glutamatergic agonist kainic acid. L-glutamate acts as an excitatory neurotransmitter at many synapses in the central nervous system. Binding of the excitatory neurotransmitter L-glutamate induces a conformation change, leading to the opening of the cation channel, and thereby converts the chemical signal to an electrical impulse. The receptor then desensitizes rapidly and enters a transient inactive state, characterized by the presence of bound agonist. In Macaca fascicularis (Crab-eating macaque), this protein is Glutamate receptor ionotropic, kainate 1 (GRIK1).